Consider the following 457-residue polypeptide: Argininosuccinate lyase (457 aa).

This sequence belongs to the lyase 1 family. Argininosuccinate lyase subfamily.

It localises to the cytoplasm. It catalyses the reaction 2-(N(omega)-L-arginino)succinate = fumarate + L-arginine. It functions in the pathway amino-acid biosynthesis; L-arginine biosynthesis; L-arginine from L-ornithine and carbamoyl phosphate: step 3/3. This is Argininosuccinate lyase from Shigella sonnei (strain Ss046).